Here is a 532-residue protein sequence, read N- to C-terminus: Apolipoprotein N-acyltransferase (532 aa).

6 consecutive transmembrane segments (helical) span residues 37 to 57 (IFVA…GAIA), 75 to 95 (WWFG…ALLV), 106 to 126 (LAVL…AMIA), 128 to 148 (LLWS…ALAE), 179 to 199 (VIGL…PALL), and 207 to 227 (TGIG…AWTL). The CN hydrolase domain occupies 245–494 (VQPSIAQAMK…VGVVDSYLPS (250 aa)). Glutamate 289 functions as the Proton acceptor in the catalytic mechanism. The active site involves lysine 353. Cysteine 406 serves as the catalytic Nucleophile. The chain crosses the membrane as a helical span at residues 505 to 525 (GWIQTVLILLTLLAASVGLIL).

It belongs to the CN hydrolase family. Apolipoprotein N-acyltransferase subfamily.

The protein resides in the cell inner membrane. The catalysed reaction is N-terminal S-1,2-diacyl-sn-glyceryl-L-cysteinyl-[lipoprotein] + a glycerophospholipid = N-acyl-S-1,2-diacyl-sn-glyceryl-L-cysteinyl-[lipoprotein] + a 2-acyl-sn-glycero-3-phospholipid + H(+). It participates in protein modification; lipoprotein biosynthesis (N-acyl transfer). In terms of biological role, catalyzes the phospholipid dependent N-acylation of the N-terminal cysteine of apolipoprotein, the last step in lipoprotein maturation. The sequence is that of Apolipoprotein N-acyltransferase from Brucella suis biovar 1 (strain 1330).